The primary structure comprises 190 residues: uncharacterized protein (190 aa).

Residues 1 to 28 (MEFSLQYITIFIFVILFLIGLFSSKSRS) form the signal peptide.

This is an uncharacterized protein from Haemophilus influenzae (strain ATCC 51907 / DSM 11121 / KW20 / Rd).